Reading from the N-terminus, the 110-residue chain is Small ribosomal subunit protein uS17 (110 aa).

Belongs to the universal ribosomal protein uS17 family. Part of the 30S ribosomal subunit.

Functionally, one of the primary rRNA binding proteins, it binds specifically to the 5'-end of 16S ribosomal RNA. In Petrotoga mobilis (strain DSM 10674 / SJ95), this protein is Small ribosomal subunit protein uS17.